Reading from the N-terminus, the 509-residue chain is Transmembrane protein 180 (509 aa).

At 1 to 10 (MGLRLLACLF) the chain is on the extracellular side. The chain crosses the membrane as a helical span at residues 11-42 (HLPTAVIYGSLSLFVSILHNVFLLYYVDTFVS). Residues 43 to 54 (VYKIDKLSFWIG) are Cytoplasmic-facing. A helical transmembrane segment spans residues 55-73 (ETVFLIWNSLNDPLFGWLS). Residues 74–98 (DRVFLSTQQPGAEISSPEVVLKRLR) are Extracellular-facing. The helical transmembrane segment at 99-116 (ALSHNGPLFAISFLAFWV) threads the bilayer. At 117-124 (AWAHPGLQ) the chain is on the cytoplasmic side. Residues 125-149 (FLLCLCMYDSFLTMVDLHHNALLAD) traverse the membrane as a helical segment. Residues 150-153 (LAVS) lie on the Extracellular side of the membrane. The chain crosses the membrane as a helical span at residues 154 to 177 (AKDRTSLNFYCSFFSAIGSLSVFM). At 178-189 (SYAVWNKEDFFS) the chain is on the cytoplasmic side. Residues 190–221 (FRIFCIVLAFCSIVGFTLSTQLLRQRFETDGK) form a helical membrane-spanning segment. The Extracellular portion of the chain corresponds to 222–259 (AKWDQESTLKELYIEKLSVPQEKRITLVEYLQQLSRHR). Residues 260–287 (NFLWFVCMNLIQVFHCHFNSNFFPLFLE) traverse the membrane as a helical segment. Over 288–300 (HLLSDKISVSTGS) the chain is Cytoplasmic. A helical membrane pass occupies residues 301 to 320 (FLLGISYIAPHLNNLYFLSL). Over 321–325 (CRRWG) the chain is Extracellular. A helical transmembrane segment spans residues 326-345 (VYAVVRGLFFLKLALSVVML). The Cytoplasmic segment spans residues 346 to 353 (LAGPDQVY). Residues 354–388 (LLCIFIASNRVFTEGTCKLLNLVVTDLVDEDLVLN) traverse the membrane as a helical segment. At 389-397 (RRKQAASAL) the chain is on the extracellular side. A helical transmembrane segment spans residues 398 to 424 (LFGMVALVTKPGQTFAPLIGTWLLCVY). Residues 425 to 458 (TGYDIFQRNPLSNVVSAQPKLESDTILEPTLRQG) lie on the Cytoplasmic side of the membrane. Residues 459–477 (CFYLLVFVPITCALLQLLS) form a helical membrane-spanning segment. Residues 478–509 (WTQFSLHGKRLQMVKAQRQGLMQGRAPEIKMI) lie on the Extracellular side of the membrane.

The protein localises to the cell membrane. The chain is Transmembrane protein 180 from Gallus gallus (Chicken).